Consider the following 367-residue polypeptide: MHFQLLGLAALGSLAAAAPAPSRTSELVERGSSCTFTSAAQASASAKSCSNIVLKNIAVPAGETLDLSKAKDGATITFEGTTTFGYKEWKGPLIRFGGNKITVTQAAGAVIDGQGSRWWDGKGTNGGKTKPKFIYAHKLQSSTIKGLHVKNSPVQVFSVQGNDVHLTDITIDNSDGDNNGGHNTDAFDVSESNGVYITGANVKNQDDCLAINSGENIEFTGATCSGGHGISIGSIGNRDSNTVKNVKVADSTVVDSDNGIRIKTISGATGSVSGVTYENITLKNIKKNGIVIEQDYKNGGPTGKPTTGVPITDLTVNGVTGSVASKATPVYILCGKGSCSDWTWKGVSISGGKKSDKCQNIPSGASC.

The N-terminal stretch at 1 to 17 (MHFQLLGLAALGSLAAA) is a signal peptide. The propeptide occupies 18-30 (APAPSRTSELVER). Residues cysteine 34 and cysteine 49 are joined by a disulfide bond. PbH1 repeat units lie at residues 161–191 (GNDVHLTDITIDNSDGDNNGGHNTDAFDVSE), 192–213 (SNGVYITGANVKNQDDCLAINS), 214–234 (GENIEFTGATCSGGHGISIGS), 243–264 (VKNVKVADSTVVDSDNGIRIKT), and 272–294 (VSGVTYENITLKNIKKNGIVIEQ). Aspartate 206 serves as the catalytic Proton donor. A disulfide bond links cysteine 208 and cysteine 224. Histidine 228 is a catalytic residue. N-linked (GlcNAc...) asparagine glycosylation occurs at asparagine 279. Cystine bridges form between cysteine 334-cysteine 339 and cysteine 358-cysteine 367.

Belongs to the glycosyl hydrolase 28 family.

The protein localises to the secreted. It carries out the reaction (1,4-alpha-D-galacturonosyl)n+m + H2O = (1,4-alpha-D-galacturonosyl)n + (1,4-alpha-D-galacturonosyl)m.. Functionally, involved in maceration and soft-rotting of plant tissue. Hydrolyzes the 1,4-alpha glycosidic bonds of de-esterified pectate in the smooth region of the plant cell wall. This is Endopolygalacturonase B (pgaB) from Aspergillus flavus (strain ATCC MYA-384 / AF70).